The following is a 300-amino-acid chain: Ribosomal protein L11 methyltransferase (300 aa).

S-adenosyl-L-methionine contacts are provided by threonine 147, glycine 168, aspartate 190, and asparagine 236.

This sequence belongs to the methyltransferase superfamily. PrmA family.

The protein resides in the cytoplasm. The enzyme catalyses L-lysyl-[protein] + 3 S-adenosyl-L-methionine = N(6),N(6),N(6)-trimethyl-L-lysyl-[protein] + 3 S-adenosyl-L-homocysteine + 3 H(+). Functionally, methylates ribosomal protein L11. The polypeptide is Ribosomal protein L11 methyltransferase (Leptospira borgpetersenii serovar Hardjo-bovis (strain JB197)).